Reading from the N-terminus, the 392-residue chain is Ceramide synthase 5 (392 aa).

Residues 1-46 (MATAAQGPLSLLWGWLWSERFWLPENVSWADLEGPADGYGYPRGRH) lie on the Lumenal side of the membrane. Asn-26 is a glycosylation site (N-linked (GlcNAc...) asparagine). A helical membrane pass occupies residues 47–67 (ILSVFPLAAGIFFVRLLFERF). Residues 75-136 (CIGIEDSGPY…RHRRNQDKPP (62 aa)) form a homeobox-like region. The TLC domain occupies 139-340 (TKFCESMWRF…IARIALKALI (202 aa)). Transmembrane regions (helical) follow at residues 148–168 (FTFY…SPWF), 183–203 (LSSG…SLMF), 214–234 (FLIM…SYIN), and 272–292 (LFVI…PFWI). The Last loop motif signature appears at 299 to 309 (ESWEIIGPYAS). Residues 311–331 (WLLNGLLLTLQLLHVIWSYLI) form a helical membrane-spanning segment. Residues 332–392 (ARIALKALIR…HMGGSYWAEE (61 aa)) are Cytoplasmic-facing. Residues 349 to 392 (RSDVESSSEEEDVTTCTKSPCDSSSSNGANRVNGHMGGSYWAEE) form a disordered region. A compositionally biased stretch (polar residues) spans 362-378 (TTCTKSPCDSSSSNGAN).

Interacts with PAQR4; the interaction regulates the stability and activity of CERS5 and is inhibited in presence of ceramides. In terms of processing, phosphorylated at the C-terminus by CK2.

The protein localises to the endoplasmic reticulum membrane. The enzyme catalyses a sphingoid base + hexadecanoyl-CoA = an N-hexadecanoyl-sphingoid base + CoA + H(+). It catalyses the reaction sphinganine + hexadecanoyl-CoA = N-hexadecanoylsphinganine + CoA + H(+). It carries out the reaction hexadecasphinganine + hexadecanoyl-CoA = N-hexadecanoylhexadecasphinganine + CoA + H(+). The catalysed reaction is sphing-4-enine + hexadecanoyl-CoA = N-hexadecanoylsphing-4-enine + CoA + H(+). The enzyme catalyses 2-hydroxyhexadecanoyl-CoA + sphinganine = N-(2-hydroxyhexadecanoyl)-sphinganine + CoA + H(+). It catalyses the reaction sphinganine + tetradecanoyl-CoA = N-(tetradecanoyl)-sphinganine + CoA + H(+). It carries out the reaction sphinganine + octadecanoyl-CoA = N-(octadecanoyl)-sphinganine + CoA + H(+). The catalysed reaction is sphinganine + (9Z)-octadecenoyl-CoA = N-(9Z-octadecenoyl)-sphinganine + CoA + H(+). The enzyme catalyses a fatty acyl-CoA + sphing-4-enine = an N-acylsphing-4-enine + CoA + H(+). The protein operates within lipid metabolism; sphingolipid metabolism. Its activity is regulated as follows. Inhibited by fumonisin B1. In terms of biological role, ceramide synthase that catalyzes the transfer of the acyl chain from acyl-CoA to a sphingoid base, with high selectivity toward palmitoyl-CoA (hexadecanoyl-CoA; C16:0-CoA). Can use other acyl donors, but with less efficiency. N-acylates sphinganine and sphingosine bases to form dihydroceramides and ceramides in de novo synthesis and salvage pathways, respectively. Plays a role in de novo ceramide synthesis and surfactant homeostasis in pulmonary epithelia. The sequence is that of Ceramide synthase 5 from Homo sapiens (Human).